The following is a 55-amino-acid chain: Large ribosomal subunit protein bL33A (55 aa).

The protein belongs to the bacterial ribosomal protein bL33 family.

The polypeptide is Large ribosomal subunit protein bL33A (Mycobacterium ulcerans (strain Agy99)).